Here is a 119-residue protein sequence, read N- to C-terminus: Membrane-anchored ubiquitin-fold protein 3 (119 aa).

The region spanning Ile8–Val76 is the Ubiquitin-like domain. Cys116 carries the post-translational modification Cysteine methyl ester. Cys116 carries S-geranylgeranyl cysteine lipidation. Residues Thr117–Leu119 constitute a propeptide, removed in mature form.

It is found in the cell membrane. Its function is as follows. May serve as docking site to facilitate the association of other proteins to the plasma membrane. In Oryza sativa subsp. japonica (Rice), this protein is Membrane-anchored ubiquitin-fold protein 3 (MUB3).